A 152-amino-acid polypeptide reads, in one-letter code: Xanthine-guanine phosphoribosyltransferase (152 aa).

5-phospho-alpha-D-ribose 1-diphosphate is bound by residues 37–38 (RG), R69, and 88–96 (DDLVDTGGT). R69 provides a ligand contact to GMP. D89 is a binding site for Mg(2+). Guanine contacts are provided by D92 and I135. Xanthine-binding residues include D92 and I135. Residues 92-96 (DTGGT) and 134-135 (WI) contribute to the GMP site.

The protein belongs to the purine/pyrimidine phosphoribosyltransferase family. XGPT subfamily. In terms of assembly, homotetramer. It depends on Mg(2+) as a cofactor.

Its subcellular location is the cell inner membrane. The enzyme catalyses GMP + diphosphate = guanine + 5-phospho-alpha-D-ribose 1-diphosphate. The catalysed reaction is XMP + diphosphate = xanthine + 5-phospho-alpha-D-ribose 1-diphosphate. It catalyses the reaction IMP + diphosphate = hypoxanthine + 5-phospho-alpha-D-ribose 1-diphosphate. The protein operates within purine metabolism; GMP biosynthesis via salvage pathway; GMP from guanine: step 1/1. It participates in purine metabolism; XMP biosynthesis via salvage pathway; XMP from xanthine: step 1/1. Its function is as follows. Purine salvage pathway enzyme that catalyzes the transfer of the ribosyl-5-phosphate group from 5-phospho-alpha-D-ribose 1-diphosphate (PRPP) to the N9 position of the 6-oxopurines guanine and xanthine to form the corresponding ribonucleotides GMP (guanosine 5'-monophosphate) and XMP (xanthosine 5'-monophosphate), with the release of PPi. To a lesser extent, also acts on hypoxanthine. In Klebsiella pneumoniae (strain 342), this protein is Xanthine-guanine phosphoribosyltransferase.